We begin with the raw amino-acid sequence, 331 residues long: Inactive serine/threonine-protein kinase BKN1 (331 aa).

Residue Gly-2 is the site of N-myristoyl glycine attachment. The S-palmitoyl cysteine moiety is linked to residue Cys-4. Residues 58 to 328 (DYSVRKFYKG…VLDGLNHIAE (271 aa)) enclose the Protein kinase domain.

Belongs to the protein kinase superfamily. Ser/Thr protein kinase family. Restricted to stigma in flowers.

Its subcellular location is the cell membrane. It localises to the nucleus. In terms of biological role, collaboratively with BKN2/SZE2, involved in compatible pollen-stigma interactions. This Arabidopsis thaliana (Mouse-ear cress) protein is Inactive serine/threonine-protein kinase BKN1.